A 229-amino-acid polypeptide reads, in one-letter code: Orotate phosphoribosyltransferase (229 aa).

Residues Arg-107, Lys-108, Lys-111, His-113, and 133-141 contribute to the 5-phospho-alpha-D-ribose 1-diphosphate site; that span reads EDLTTAGGS. Orotate is bound at residue Thr-137.

The protein belongs to the purine/pyrimidine phosphoribosyltransferase family. PyrE subfamily. As to quaternary structure, homodimer. It depends on Mg(2+) as a cofactor.

The enzyme catalyses orotidine 5'-phosphate + diphosphate = orotate + 5-phospho-alpha-D-ribose 1-diphosphate. Its pathway is pyrimidine metabolism; UMP biosynthesis via de novo pathway; UMP from orotate: step 1/2. Functionally, catalyzes the transfer of a ribosyl phosphate group from 5-phosphoribose 1-diphosphate to orotate, leading to the formation of orotidine monophosphate (OMP). In Rhizobium etli (strain CIAT 652), this protein is Orotate phosphoribosyltransferase.